The primary structure comprises 395 residues: Terminal nucleotidyltransferase 5B (395 aa).

This sequence belongs to the TENT family.

Its subcellular location is the cytoplasm. It is found in the nucleus. The catalysed reaction is RNA(n) + ATP = RNA(n)-3'-adenine ribonucleotide + diphosphate. In terms of biological role, catalyzes the transfer of one adenosine molecule from an ATP to an mRNA poly(A) tail bearing a 3'-OH terminal group in an ATP hydrolysis-dependent manner and participates in cytoplasmic polyadenylation. May be involved in maintaining the translation efficiency of at least some genes through preventing degradation of their mRNAs. The polypeptide is Terminal nucleotidyltransferase 5B (Xenopus tropicalis (Western clawed frog)).